An 87-amino-acid polypeptide reads, in one-letter code: MASKDFHIVAETGIHARPATLLVQTASKFASDITLDYKGKAVNLKSIMGVMSLGVGQGADVTITAEGADADDAIAAINETMTKEGLA.

The 86-residue stretch at 2–87 (ASKDFHIVAE…NETMTKEGLA (86 aa)) folds into the HPr domain. His-15 functions as the Pros-phosphohistidine intermediate in the catalytic mechanism. Ser-46 carries the post-translational modification Phosphoserine; by HPrK/P.

This sequence belongs to the HPr family.

It is found in the cytoplasm. Phosphorylation on Ser-46 inhibits the phosphoryl transfer from enzyme I to HPr. Functionally, general (non sugar-specific) component of the phosphoenolpyruvate-dependent sugar phosphotransferase system (sugar PTS). This major carbohydrate active-transport system catalyzes the phosphorylation of incoming sugar substrates concomitantly with their translocation across the cell membrane. The phosphoryl group from phosphoenolpyruvate (PEP) is transferred to the phosphoryl carrier protein HPr by enzyme I. Phospho-HPr then transfers it to the PTS EIIA domain. In terms of biological role, P-Ser-HPr interacts with the catabolite control protein A (CcpA), forming a complex that binds to DNA at the catabolite response elements cre, operator sites preceding a large number of catabolite-regulated genes. Thus, P-Ser-HPr is a corepressor in carbon catabolite repression (CCR), a mechanism that allows bacteria to coordinate and optimize the utilization of available carbon sources. P-Ser-HPr also plays a role in inducer exclusion, in which it probably interacts with several non-PTS permeases and inhibits their transport activity. The chain is Phosphocarrier protein HPr (ptsH) from Streptococcus mutans serotype c (strain ATCC 700610 / UA159).